Reading from the N-terminus, the 102-residue chain is UPF0058 protein MTH_224 (102 aa).

Belongs to the UPF0058 family.

This Methanothermobacter thermautotrophicus (strain ATCC 29096 / DSM 1053 / JCM 10044 / NBRC 100330 / Delta H) (Methanobacterium thermoautotrophicum) protein is UPF0058 protein MTH_224.